An 89-amino-acid chain; its full sequence is YcgL domain-containing protein Asuc_1390 (89 aa).

In terms of domain architecture, YcgL spans 1–85 (MLCAIYKSKK…KDDWLFTIEK (85 aa)).

The polypeptide is YcgL domain-containing protein Asuc_1390 (Actinobacillus succinogenes (strain ATCC 55618 / DSM 22257 / CCUG 43843 / 130Z)).